The chain runs to 435 residues: Adenylosuccinate synthetase (435 aa).

GTP contacts are provided by residues 22-28 (GDEGKGK) and 50-52 (GHT). The active-site Proton acceptor is the D23. Positions 23 and 50 each coordinate Mg(2+). Residues 23 to 26 (DEGK), 48 to 51 (NAGH), T140, R154, Q235, T250, and R314 each bind IMP. The active-site Proton donor is H51. 310–316 (ATTGRKR) provides a ligand contact to substrate. GTP-binding positions include R316, 342–344 (KLD), and 424–426 (SVG).

The protein belongs to the adenylosuccinate synthetase family. Homodimer. It depends on Mg(2+) as a cofactor.

The protein resides in the cytoplasm. The enzyme catalyses IMP + L-aspartate + GTP = N(6)-(1,2-dicarboxyethyl)-AMP + GDP + phosphate + 2 H(+). Its pathway is purine metabolism; AMP biosynthesis via de novo pathway; AMP from IMP: step 1/2. Plays an important role in the de novo pathway of purine nucleotide biosynthesis. Catalyzes the first committed step in the biosynthesis of AMP from IMP. The chain is Adenylosuccinate synthetase from Chlorobaculum tepidum (strain ATCC 49652 / DSM 12025 / NBRC 103806 / TLS) (Chlorobium tepidum).